The primary structure comprises 244 residues: Large ribosomal subunit protein uL30w (244 aa).

It belongs to the universal ribosomal protein uL30 family.

The protein is Large ribosomal subunit protein uL30w (RPL7D) of Arabidopsis thaliana (Mouse-ear cress).